The chain runs to 438 residues: GTPase Der (438 aa).

EngA-type G domains lie at 4–168 (PVVA…PAGA) and 176–351 (VRIA…GEYR). GTP is bound by residues 10–17 (GRPNVGKS), 57–61 (DTGGI), 120–123 (NKVD), 182–189 (GRPNVGKS), 229–233 (DTAGM), and 294–297 (NKWD). The KH-like domain maps to 352-436 (RQIPTSMLNR…PVRILFRRRE (85 aa)).

The protein belongs to the TRAFAC class TrmE-Era-EngA-EngB-Septin-like GTPase superfamily. EngA (Der) GTPase family. As to quaternary structure, associates with the 50S ribosomal subunit.

Functionally, GTPase that plays an essential role in the late steps of ribosome biogenesis. This chain is GTPase Der, found in Desulforudis audaxviator (strain MP104C).